The sequence spans 476 residues: Bifunctional protein HldE (476 aa).

Residues 1–319 form a ribokinase region; that stretch reads MKVTLPAFEK…GALASHQGES (319 aa). 195 to 198 contacts ATP; sequence NMSE. Aspartate 264 is an active-site residue. The interval 345–476 is cytidylyltransferase; sequence MTNGCFDILH…SIIQNIMARQ (132 aa).

In the N-terminal section; belongs to the carbohydrate kinase PfkB family. The protein in the C-terminal section; belongs to the cytidylyltransferase family. In terms of assembly, homodimer.

The catalysed reaction is D-glycero-beta-D-manno-heptose 7-phosphate + ATP = D-glycero-beta-D-manno-heptose 1,7-bisphosphate + ADP + H(+). It catalyses the reaction D-glycero-beta-D-manno-heptose 1-phosphate + ATP + H(+) = ADP-D-glycero-beta-D-manno-heptose + diphosphate. It participates in nucleotide-sugar biosynthesis; ADP-L-glycero-beta-D-manno-heptose biosynthesis; ADP-L-glycero-beta-D-manno-heptose from D-glycero-beta-D-manno-heptose 7-phosphate: step 1/4. Its pathway is nucleotide-sugar biosynthesis; ADP-L-glycero-beta-D-manno-heptose biosynthesis; ADP-L-glycero-beta-D-manno-heptose from D-glycero-beta-D-manno-heptose 7-phosphate: step 3/4. Catalyzes the phosphorylation of D-glycero-D-manno-heptose 7-phosphate at the C-1 position to selectively form D-glycero-beta-D-manno-heptose-1,7-bisphosphate. Its function is as follows. Catalyzes the ADP transfer from ATP to D-glycero-beta-D-manno-heptose 1-phosphate, yielding ADP-D-glycero-beta-D-manno-heptose. The protein is Bifunctional protein HldE of Shewanella denitrificans (strain OS217 / ATCC BAA-1090 / DSM 15013).